The sequence spans 424 residues: Serine--tRNA ligase (424 aa).

233–235 is a binding site for L-serine; the sequence is TAE. Residue 264-266 participates in ATP binding; sequence RRE. L-serine is bound at residue glutamate 287. 351–354 provides a ligand contact to ATP; it reads EISS. An L-serine-binding site is contributed by serine 386.

It belongs to the class-II aminoacyl-tRNA synthetase family. Type-1 seryl-tRNA synthetase subfamily. In terms of assembly, homodimer. The tRNA molecule binds across the dimer.

Its subcellular location is the cytoplasm. The catalysed reaction is tRNA(Ser) + L-serine + ATP = L-seryl-tRNA(Ser) + AMP + diphosphate + H(+). It carries out the reaction tRNA(Sec) + L-serine + ATP = L-seryl-tRNA(Sec) + AMP + diphosphate + H(+). It functions in the pathway aminoacyl-tRNA biosynthesis; selenocysteinyl-tRNA(Sec) biosynthesis; L-seryl-tRNA(Sec) from L-serine and tRNA(Sec): step 1/1. Functionally, catalyzes the attachment of serine to tRNA(Ser). Is also able to aminoacylate tRNA(Sec) with serine, to form the misacylated tRNA L-seryl-tRNA(Sec), which will be further converted into selenocysteinyl-tRNA(Sec). This is Serine--tRNA ligase from Petrotoga mobilis (strain DSM 10674 / SJ95).